Reading from the N-terminus, the 468-residue chain is MAKTLYEKVFDAHVVYEGKNELPILYIDRHLIHEVTSPQAFSGLKMAKRRMARADLTLATIDHDVSTKSVDLNACSDMAKEQITTLMQNTKEFGVRLLGLGDKNQGIVHIVGPELGFTLPGVTLVCGDSHTATHGAFGALAFGIGTSEVEHVMATQTLKQAKLKTMKIECKGQFQKGVYTKDLILYLIAQYGTAKGTGYAIEFCGELIRNLSMEARMTLCNMAIEFGAKVGMIAPDEITFEYIKGKEFAPKGEEFQKYCEYWKSLRSDEGAKYDASITLDVSKIKPQISYGTNPSQVIGIDEKIPKISDFKNQSEQKSLLDALYYVNLEQDQVIEGVKIDIVFIGSCTNGRLEDLKIAADILKGRKIHKNVKALIVPGSMQVRKEAENLGLDKIFIEAGCEWRYAGCSMCLGMNDDKANSGQRVASTSNRNFVGRQGKGSITHLMSPASAAACAIEGVICDNRKYLGV.

Residues cysteine 347, cysteine 407, and cysteine 410 each coordinate [4Fe-4S] cluster.

It belongs to the aconitase/IPM isomerase family. LeuC type 1 subfamily. As to quaternary structure, heterodimer of LeuC and LeuD. The cofactor is [4Fe-4S] cluster.

The catalysed reaction is (2R,3S)-3-isopropylmalate = (2S)-2-isopropylmalate. It functions in the pathway amino-acid biosynthesis; L-leucine biosynthesis; L-leucine from 3-methyl-2-oxobutanoate: step 2/4. Functionally, catalyzes the isomerization between 2-isopropylmalate and 3-isopropylmalate, via the formation of 2-isopropylmaleate. The protein is 3-isopropylmalate dehydratase large subunit of Campylobacter jejuni (strain RM1221).